A 214-amino-acid chain; its full sequence is Ribonuclease P protein component 3 (214 aa).

The protein belongs to the eukaryotic/archaeal RNase P protein component 3 family. As to quaternary structure, consists of a catalytic RNA component and at least 4-5 protein subunits.

The protein resides in the cytoplasm. The enzyme catalyses Endonucleolytic cleavage of RNA, removing 5'-extranucleotides from tRNA precursor.. Part of ribonuclease P, a protein complex that generates mature tRNA molecules by cleaving their 5'-ends. The polypeptide is Ribonuclease P protein component 3 (Thermococcus gammatolerans (strain DSM 15229 / JCM 11827 / EJ3)).